We begin with the raw amino-acid sequence, 450 residues long: Protein tweety homolog 1 (450 aa).

Topologically, residues 1-43 are extracellular; the sequence is MGAPPGYRPSAWVHLLHQLPRADFQLRPVPSGFAPRDQEYQQA. A helical transmembrane segment spans residues 44 to 64; that stretch reads LLLVAALAGLGLGLSLIFIAV. Residues 65 to 88 lie on the Cytoplasmic side of the membrane; sequence YLIRFCCCRPPEPPGAKSPPPGGG. A helical membrane pass occupies residues 89 to 109; it reads CVTWSCIAALLVGCAGIGIGF. Over 110 to 214 the chain is Extracellular; sequence YGNSETSDGV…DVTFVEEYRW (105 aa). A glycan (N-linked (GlcNAc...) asparagine) is linked at N130. Residues 215–235 form a helical membrane-spanning segment; it reads LAYVLLLLLVLLVCLFTLLGL. At 236-240 the chain is on the cytoplasmic side; sequence AKQSK. The chain crosses the membrane as a helical span at residues 241-261; that stretch reads WLVVVMTAMSLLVLVLSWGSM. Residues 262-390 lie on the Extracellular side of the membrane; the sequence is GLEAATAVGL…LRGLCEDALE (129 aa). Disulfide bonds link C275-C385 and C303-C370. Residues N284 and N355 are each glycosylated (N-linked (GlcNAc...) asparagine). Residues 391-411 traverse the membrane as a helical segment; it reads GLLFLMLFSLLSAGALATTLC. Residues 412-450 are Cytoplasmic-facing; sequence SLPRAWALFPPSDDYDDTDDDDPFNPQESKRFVQWQSSI. Positions 428-450 are disordered; the sequence is DTDDDDPFNPQESKRFVQWQSSI. The residue at position 440 (S440) is a Phosphoserine.

Belongs to the tweety family. As to quaternary structure, homotetramer; disulfide-linked. Homodimer. In terms of processing, N-glycosylated. Contains high-mannose, hybrid and complex oligosaccharides.

The protein localises to the cell membrane. The enzyme catalyses chloride(in) = chloride(out). The catalysed reaction is L-glutamate(out) = L-glutamate(in). In terms of biological role, calcium-independent, swelling-dependent volume-regulated anion channel (VRAC-swell) which plays a pivotal role in the process of regulatory volume decrease (RVD) in the brain through the efflux of anions like chloride and organic osmolytes like glutamate. This chain is Protein tweety homolog 1 (Ttyh1), found in Rattus norvegicus (Rat).